We begin with the raw amino-acid sequence, 417 residues long: NADH-quinone oxidoreductase subunit D (417 aa).

The protein belongs to the complex I 49 kDa subunit family. As to quaternary structure, NDH-1 is composed of 14 different subunits. Subunits NuoB, C, D, E, F, and G constitute the peripheral sector of the complex.

It localises to the cell inner membrane. The enzyme catalyses a quinone + NADH + 5 H(+)(in) = a quinol + NAD(+) + 4 H(+)(out). In terms of biological role, NDH-1 shuttles electrons from NADH, via FMN and iron-sulfur (Fe-S) centers, to quinones in the respiratory chain. The immediate electron acceptor for the enzyme in this species is believed to be ubiquinone. Couples the redox reaction to proton translocation (for every two electrons transferred, four hydrogen ions are translocated across the cytoplasmic membrane), and thus conserves the redox energy in a proton gradient. This chain is NADH-quinone oxidoreductase subunit D, found in Paraburkholderia xenovorans (strain LB400).